The sequence spans 344 residues: Holliday junction branch migration complex subunit RuvB (344 aa).

The tract at residues 1–180 is large ATPase domain (RuvB-L); the sequence is MSRIVSGEAQ…FGIPVRLEFY (180 aa). ATP is bound by residues L19, R20, G61, K64, T65, T66, R170, Y180, and R217. T65 is a Mg(2+) binding site. A small ATPAse domain (RuvB-S) region spans residues 181-251; it reads THDELARVLL…AAAAALARLD (71 aa). Residues 254-344 are head domain (RuvB-H); that stretch reads EVGLDALDRR…AAPPADLFDK (91 aa). DNA-binding residues include R290, R309, and R314.

The protein belongs to the RuvB family. As to quaternary structure, homohexamer. Forms an RuvA(8)-RuvB(12)-Holliday junction (HJ) complex. HJ DNA is sandwiched between 2 RuvA tetramers; dsDNA enters through RuvA and exits via RuvB. An RuvB hexamer assembles on each DNA strand where it exits the tetramer. Each RuvB hexamer is contacted by two RuvA subunits (via domain III) on 2 adjacent RuvB subunits; this complex drives branch migration. In the full resolvosome a probable DNA-RuvA(4)-RuvB(12)-RuvC(2) complex forms which resolves the HJ.

The protein resides in the cytoplasm. It catalyses the reaction ATP + H2O = ADP + phosphate + H(+). Functionally, the RuvA-RuvB-RuvC complex processes Holliday junction (HJ) DNA during genetic recombination and DNA repair, while the RuvA-RuvB complex plays an important role in the rescue of blocked DNA replication forks via replication fork reversal (RFR). RuvA specifically binds to HJ cruciform DNA, conferring on it an open structure. The RuvB hexamer acts as an ATP-dependent pump, pulling dsDNA into and through the RuvAB complex. RuvB forms 2 homohexamers on either side of HJ DNA bound by 1 or 2 RuvA tetramers; 4 subunits per hexamer contact DNA at a time. Coordinated motions by a converter formed by DNA-disengaged RuvB subunits stimulates ATP hydrolysis and nucleotide exchange. Immobilization of the converter enables RuvB to convert the ATP-contained energy into a lever motion, pulling 2 nucleotides of DNA out of the RuvA tetramer per ATP hydrolyzed, thus driving DNA branch migration. The RuvB motors rotate together with the DNA substrate, which together with the progressing nucleotide cycle form the mechanistic basis for DNA recombination by continuous HJ branch migration. Branch migration allows RuvC to scan DNA until it finds its consensus sequence, where it cleaves and resolves cruciform DNA. The protein is Holliday junction branch migration complex subunit RuvB of Phenylobacterium zucineum (strain HLK1).